The chain runs to 148 residues: Deoxyuridine 5'-triphosphate nucleotidohydrolase (148 aa).

Residues 68 to 70 (RSG), asparagine 81, 85 to 87 (TID), and lysine 95 each bind substrate.

This sequence belongs to the dUTPase family. Requires Mg(2+) as cofactor.

It catalyses the reaction dUTP + H2O = dUMP + diphosphate + H(+). The protein operates within pyrimidine metabolism; dUMP biosynthesis; dUMP from dCTP (dUTP route): step 2/2. Functionally, this enzyme is involved in nucleotide metabolism: it produces dUMP, the immediate precursor of thymidine nucleotides and it decreases the intracellular concentration of dUTP so that uracil cannot be incorporated into DNA. The chain is Deoxyuridine 5'-triphosphate nucleotidohydrolase from Rickettsia canadensis (strain McKiel).